A 727-amino-acid chain; its full sequence is Pentatricopeptide repeat-containing protein At2g33680 (727 aa).

17 PPR repeats span residues 13–47 (HTSTLLKKLTHHSQQRNLVAGRAVHGQIIRTGAST), 48–78 (CIQHANVLVNFYAKCGKLAKAHSIFNAIICK), 79–116 (DVVSWNSLITGYSQNGGISSSYTVMQLFREMRAQDILP), 117–150 (NAYTLAGIFKAESSLQSSTVGRQAHALVVKMSSF), 152–182 (DIYVDTSLVGMYCKAGLVEDGLKVFAYMPER), 183–213 (NTYTWSTMVSGYATRGRVEEAIKVFNLFLRE), 220–254 (SDYVFTAVLSSLAATIYVGLGRQIHCITIKNGLLG), 255–285 (FVALSNALVTMYSKCESLNEACKMFDSSGDR), 286–320 (NSITWSAMVTGYSQNGESLEAVKLFSRMFSAGIKP), 321–355 (SEYTIVGVLNACSDICYLEEGKQLHSFLLKLGFER), 356–386 (HLFATTALVDMYAKAGCLADARKGFDCLQER), 387–421 (DVALWTSLISGYVQNSDNEEALILYRRMKTAGIIP), 422–456 (NDPTMASVLKACSSLATLELGKQVHGHTIKHGFGL), 457–487 (EVPIGSALSTMYSKCGSLEDGNLVFRRTPNK), 488–522 (DVVSWNAMISGLSHNGQGDEALELFEEMLAEGMEP), 523–553 (DDVTFVNIISACSHKGFVERGWFYFNMMSDQ), and 559–593 (KVDHYACMVDLLSRAGQLKEAKEFIESANIDHGLC). Residues 594–669 (LWRILLSACK…EVGCSWIELK (76 aa)) form a type E motif region. Residues 670 to 700 (NQYHVFVVGDTMHPMIEETKDLVCLVSRQMI) form a type E(+) motif region.

This sequence belongs to the PPR family. PCMP-E subfamily.

The protein is Pentatricopeptide repeat-containing protein At2g33680 (PCMP-E19) of Arabidopsis thaliana (Mouse-ear cress).